Here is a 301-residue protein sequence, read N- to C-terminus: Large ribosomal subunit protein uL18 (301 aa).

Positions 257–271 are enriched in basic and acidic residues; that stretch reads NPERVKSTKKNDKPK. Positions 257-283 are disordered; the sequence is NPERVKSTKKNDKPKRDHKKFYPTKLT.

It belongs to the universal ribosomal protein uL18 family. In terms of assembly, component of the large ribosomal subunit (LSU).

It is found in the cytoplasm. Its subcellular location is the nucleus. Component of the ribosome, a large ribonucleoprotein complex responsible for the synthesis of proteins in the cell. The small ribosomal subunit (SSU) binds messenger RNAs (mRNAs) and translates the encoded message by selecting cognate aminoacyl-transfer RNA (tRNA) molecules. The large subunit (LSU) contains the ribosomal catalytic site termed the peptidyl transferase center (PTC), which catalyzes the formation of peptide bonds, thereby polymerizing the amino acids delivered by tRNAs into a polypeptide chain. The nascent polypeptides leave the ribosome through a tunnel in the LSU and interact with protein factors that function in enzymatic processing, targeting, and the membrane insertion of nascent chains at the exit of the ribosomal tunnel. This Tetrahymena thermophila (strain SB210) protein is Large ribosomal subunit protein uL18 (RPL5).